The sequence spans 392 residues: Formate-dependent phosphoribosylglycinamide formyltransferase (392 aa).

N(1)-(5-phospho-beta-D-ribosyl)glycinamide contacts are provided by residues 22–23 and glutamate 82; that span reads EL. ATP is bound by residues arginine 114, lysine 155, 160 to 165, 195 to 198, and glutamate 203; these read SSGKGQ and EGLV. Positions 119–308 constitute an ATP-grasp domain; that stretch reads RLAAETLGVP…EFALHVRAFL (190 aa). Residues glutamate 267 and glutamate 279 each coordinate Mg(2+). Residues aspartate 286, lysine 355, and 362–363 each bind N(1)-(5-phospho-beta-D-ribosyl)glycinamide; that span reads RR.

Belongs to the PurK/PurT family. As to quaternary structure, homodimer.

The enzyme catalyses N(1)-(5-phospho-beta-D-ribosyl)glycinamide + formate + ATP = N(2)-formyl-N(1)-(5-phospho-beta-D-ribosyl)glycinamide + ADP + phosphate + H(+). Its pathway is purine metabolism; IMP biosynthesis via de novo pathway; N(2)-formyl-N(1)-(5-phospho-D-ribosyl)glycinamide from N(1)-(5-phospho-D-ribosyl)glycinamide (formate route): step 1/1. Involved in the de novo purine biosynthesis. Catalyzes the transfer of formate to 5-phospho-ribosyl-glycinamide (GAR), producing 5-phospho-ribosyl-N-formylglycinamide (FGAR). Formate is provided by PurU via hydrolysis of 10-formyl-tetrahydrofolate. The sequence is that of Formate-dependent phosphoribosylglycinamide formyltransferase from Pectobacterium carotovorum subsp. carotovorum (strain PC1).